A 195-amino-acid polypeptide reads, in one-letter code: Probable nicotinate-nucleotide adenylyltransferase (195 aa).

This sequence belongs to the NadD family.

It carries out the reaction nicotinate beta-D-ribonucleotide + ATP + H(+) = deamido-NAD(+) + diphosphate. Its pathway is cofactor biosynthesis; NAD(+) biosynthesis; deamido-NAD(+) from nicotinate D-ribonucleotide: step 1/1. Catalyzes the reversible adenylation of nicotinate mononucleotide (NaMN) to nicotinic acid adenine dinucleotide (NaAD). The chain is Probable nicotinate-nucleotide adenylyltransferase from Gluconobacter oxydans (strain 621H) (Gluconobacter suboxydans).